A 197-amino-acid polypeptide reads, in one-letter code: Peptidyl-tRNA hydrolase (197 aa).

A tRNA-binding site is contributed by tyrosine 23. Histidine 28 functions as the Proton acceptor in the catalytic mechanism. 3 residues coordinate tRNA: phenylalanine 73, asparagine 75, and asparagine 121.

The protein belongs to the PTH family. In terms of assembly, monomer.

It localises to the cytoplasm. It carries out the reaction an N-acyl-L-alpha-aminoacyl-tRNA + H2O = an N-acyl-L-amino acid + a tRNA + H(+). Functionally, hydrolyzes ribosome-free peptidyl-tRNAs (with 1 or more amino acids incorporated), which drop off the ribosome during protein synthesis, or as a result of ribosome stalling. Catalyzes the release of premature peptidyl moieties from peptidyl-tRNA molecules trapped in stalled 50S ribosomal subunits, and thus maintains levels of free tRNAs and 50S ribosomes. The polypeptide is Peptidyl-tRNA hydrolase (Frankia casuarinae (strain DSM 45818 / CECT 9043 / HFP020203 / CcI3)).